The sequence spans 47 residues: Photosystem II reaction center protein K (47 aa).

Residues 1–10 (MALINFDLLA) constitute a propeptide that is removed on maturation. A helical membrane pass occupies residues 26 to 46 (LPLIPLFFFLLVFVWQAAVGF).

It belongs to the PsbK family. As to quaternary structure, PSII is composed of 1 copy each of membrane proteins PsbA, PsbB, PsbC, PsbD, PsbE, PsbF, PsbH, PsbI, PsbJ, PsbK, PsbL, PsbM, PsbT, PsbX, PsbY, Psb30/Ycf12, peripheral proteins PsbO, CyanoQ (PsbQ), PsbU, PsbV and a large number of cofactors. It forms dimeric complexes.

The protein localises to the cellular thylakoid membrane. Its function is as follows. One of the components of the core complex of photosystem II (PSII). PSII is a light-driven water:plastoquinone oxidoreductase that uses light energy to abstract electrons from H(2)O, generating O(2) and a proton gradient subsequently used for ATP formation. It consists of a core antenna complex that captures photons, and an electron transfer chain that converts photonic excitation into a charge separation. This Prochlorococcus marinus (strain NATL2A) protein is Photosystem II reaction center protein K.